The primary structure comprises 476 residues: Aspartyl/glutamyl-tRNA(Asn/Gln) amidotransferase subunit B (476 aa).

It belongs to the GatB/GatE family. GatB subfamily. Heterotrimer of A, B and C subunits.

It carries out the reaction L-glutamyl-tRNA(Gln) + L-glutamine + ATP + H2O = L-glutaminyl-tRNA(Gln) + L-glutamate + ADP + phosphate + H(+). The catalysed reaction is L-aspartyl-tRNA(Asn) + L-glutamine + ATP + H2O = L-asparaginyl-tRNA(Asn) + L-glutamate + ADP + phosphate + 2 H(+). Functionally, allows the formation of correctly charged Asn-tRNA(Asn) or Gln-tRNA(Gln) through the transamidation of misacylated Asp-tRNA(Asn) or Glu-tRNA(Gln) in organisms which lack either or both of asparaginyl-tRNA or glutaminyl-tRNA synthetases. The reaction takes place in the presence of glutamine and ATP through an activated phospho-Asp-tRNA(Asn) or phospho-Glu-tRNA(Gln). The sequence is that of Aspartyl/glutamyl-tRNA(Asn/Gln) amidotransferase subunit B from Laribacter hongkongensis (strain HLHK9).